The primary structure comprises 936 residues: Protein translocase subunit SecA (936 aa).

Residues Gln-87, 105–109, and Asp-515 contribute to the ATP site; that span reads GEGKT. Zn(2+)-binding residues include Cys-920, Cys-922, Cys-931, and His-932.

It belongs to the SecA family. As to quaternary structure, monomer and homodimer. Part of the essential Sec protein translocation apparatus which comprises SecA, SecYEG and auxiliary proteins SecDF-YajC and YidC. It depends on Zn(2+) as a cofactor.

Its subcellular location is the cell inner membrane. The protein resides in the cytoplasm. The enzyme catalyses ATP + H2O + cellular proteinSide 1 = ADP + phosphate + cellular proteinSide 2.. In terms of biological role, part of the Sec protein translocase complex. Interacts with the SecYEG preprotein conducting channel. Has a central role in coupling the hydrolysis of ATP to the transfer of proteins into and across the cell membrane, serving both as a receptor for the preprotein-SecB complex and as an ATP-driven molecular motor driving the stepwise translocation of polypeptide chains across the membrane. This is Protein translocase subunit SecA from Paraburkholderia phymatum (strain DSM 17167 / CIP 108236 / LMG 21445 / STM815) (Burkholderia phymatum).